We begin with the raw amino-acid sequence, 644 residues long: Protein SNOWY COTYLEDON 3 (644 aa).

Disordered stretches follow at residues 1–129 (MVAA…TRTE), 162–252 (ETAT…DGRL), and 290–414 (SDTD…SRVR). The span at 53–77 (SPSPSHSTTTTTTTATSTSTSSSSS) shows a compositional bias: low complexity. Residues 91–112 (LSRTTNSASNLVYTPSSLPKRS) show a composition bias toward polar residues. Residues 172 to 190 (CTPERRRATPVRDQRENSK) show a composition bias toward basic and acidic residues. Polar residues-rich tracts occupy residues 290-302 (SDTD…STNG) and 314-332 (TRSL…QETN). Composition is skewed to low complexity over residues 343-370 (SPQC…SSDS) and 397-412 (ATAT…SPSR). Positions 463 to 466 (QWRF) match the QWRF motif motif.

Belongs to the QWRF family. Expressed in young developing tissues, such as seedlings, roots, flowers, buds and young siliques, and to a lesser extent in mature green tissues.

Its subcellular location is the peroxisome. Its function is as follows. Probable microtubule-associated peroxisomal protein required for chloroplast biogenesis and for the formation of the prolamellar body and prothylakoids in etioplasts. Not involved in peroxisomal metabolism, including mobilization of storage compounds during germination, fatty acid beta-oxydation or photorespiration. The protein is Protein SNOWY COTYLEDON 3 (SCO3) of Arabidopsis thaliana (Mouse-ear cress).